A 493-amino-acid chain; its full sequence is Trigger factor (493 aa).

Residues 169–254 (GDRVTMDYLG…VKEVAAPAET (86 aa)) form the PPIase FKBP-type domain. A disordered region spans residues 439–493 (ELLAEDEDGDDTKPAKKSAKKKAAKAEDASAEGEEAAPKKKAAAKKKAADEGDAE).

The protein belongs to the FKBP-type PPIase family. Tig subfamily.

The protein resides in the cytoplasm. The enzyme catalyses [protein]-peptidylproline (omega=180) = [protein]-peptidylproline (omega=0). In terms of biological role, involved in protein export. Acts as a chaperone by maintaining the newly synthesized protein in an open conformation. Functions as a peptidyl-prolyl cis-trans isomerase. This chain is Trigger factor, found in Allorhizobium ampelinum (strain ATCC BAA-846 / DSM 112012 / S4) (Agrobacterium vitis (strain S4)).